Here is a 126-residue protein sequence, read N- to C-terminus: Aspartate 1-decarboxylase (126 aa).

Catalysis depends on Ser-25, which acts as the Schiff-base intermediate with substrate; via pyruvic acid. Ser-25 is modified (pyruvic acid (Ser)). Thr-57 serves as a coordination point for substrate. The active-site Proton donor is Tyr-58. 73–75 (GGA) serves as a coordination point for substrate.

Belongs to the PanD family. In terms of assembly, heterooctamer of four alpha and four beta subunits. It depends on pyruvate as a cofactor. Post-translationally, is synthesized initially as an inactive proenzyme, which is activated by self-cleavage at a specific serine bond to produce a beta-subunit with a hydroxyl group at its C-terminus and an alpha-subunit with a pyruvoyl group at its N-terminus.

Its subcellular location is the cytoplasm. The enzyme catalyses L-aspartate + H(+) = beta-alanine + CO2. It participates in cofactor biosynthesis; (R)-pantothenate biosynthesis; beta-alanine from L-aspartate: step 1/1. Catalyzes the pyruvoyl-dependent decarboxylation of aspartate to produce beta-alanine. This Xylella fastidiosa (strain M12) protein is Aspartate 1-decarboxylase.